Here is a 948-residue protein sequence, read N- to C-terminus: RNA polymerase-associated protein RapA (948 aa).

The Helicase ATP-binding domain occupies 164–332; it reads EVADRIAPRV…FARLRLLDPN (169 aa). An ATP-binding site is contributed by 177–184; it reads DEVGLGKT. The DEAH box signature appears at 278 to 281; that stretch reads DEAH. In terms of domain architecture, Helicase C-terminal spans 473-627; the sequence is RVEWLIDTLK…TCPTGNALQH (155 aa).

It belongs to the SNF2/RAD54 helicase family. RapA subfamily. Interacts with the RNAP. Has a higher affinity for the core RNAP than for the holoenzyme. Its ATPase activity is stimulated by binding to RNAP.

Its function is as follows. Transcription regulator that activates transcription by stimulating RNA polymerase (RNAP) recycling in case of stress conditions such as supercoiled DNA or high salt concentrations. Probably acts by releasing the RNAP, when it is trapped or immobilized on tightly supercoiled DNA. Does not activate transcription on linear DNA. Probably not involved in DNA repair. The sequence is that of RNA polymerase-associated protein RapA from Pseudomonas syringae pv. tomato (strain ATCC BAA-871 / DC3000).